Here is a 122-residue protein sequence, read N- to C-terminus: Basic phospholipase A2 LmTX-I (122 aa).

Intrachain disulfides connect C26–C115, C28–C44, C43–C95, C49–C122, C50–C88, and C75–C86. The Ca(2+) site is built by Y27, G29, and G31. The active site involves H47. D48 lines the Ca(2+) pocket. The active site involves D89.

In terms of assembly, monomer. The cofactor is Ca(2+). In terms of tissue distribution, expressed by the venom gland.

Its subcellular location is the secreted. It catalyses the reaction a 1,2-diacyl-sn-glycero-3-phosphocholine + H2O = a 1-acyl-sn-glycero-3-phosphocholine + a fatty acid + H(+). Its activity is regulated as follows. Inhibited by Mn(2+), Mg(2+), Zn(2+) and Cu(2+). Its function is as follows. Snake venom phospholipase A2 (PLA2) that displays neurotoxic and myotoxic activities. Induces inflammatory edema by mechanisms involving mast cell activation and arachidonic acid metabolites. Increases plasma creatine kinase activity. PLA2 catalyzes the calcium-dependent hydrolysis of the 2-acyl groups in 3-sn-phosphoglycerides. The chain is Basic phospholipase A2 LmTX-I from Lachesis muta muta (Bushmaster).